A 198-amino-acid chain; its full sequence is Ribonuclease HII (198 aa).

The RNase H type-2 domain occupies 3–198 (LSVGGIDEAG…SWETVGKLFK (196 aa)). A divalent metal cation contacts are provided by Asp-9, Glu-10, and Asp-104.

This sequence belongs to the RNase HII family. Requires Mn(2+) as cofactor. Mg(2+) is required as a cofactor.

The protein localises to the cytoplasm. The catalysed reaction is Endonucleolytic cleavage to 5'-phosphomonoester.. Functionally, endonuclease that specifically degrades the RNA of RNA-DNA hybrids. This chain is Ribonuclease HII, found in Pyrobaculum arsenaticum (strain DSM 13514 / JCM 11321 / PZ6).